We begin with the raw amino-acid sequence, 188 residues long: Elongation factor P (188 aa).

Lys34 carries the N6-(3,6-diaminohexanoyl)-5-hydroxylysine modification.

This sequence belongs to the elongation factor P family. In terms of processing, may be beta-lysylated on the epsilon-amino group of Lys-34 by the combined action of EpmA and EpmB, and then hydroxylated on the C5 position of the same residue by EpmC (if this protein is present). Lysylation is critical for the stimulatory effect of EF-P on peptide-bond formation. The lysylation moiety may extend toward the peptidyltransferase center and stabilize the terminal 3-CCA end of the tRNA. Hydroxylation of the C5 position on Lys-34 may allow additional potential stabilizing hydrogen-bond interactions with the P-tRNA.

The protein localises to the cytoplasm. It functions in the pathway protein biosynthesis; polypeptide chain elongation. Functionally, involved in peptide bond synthesis. Alleviates ribosome stalling that occurs when 3 or more consecutive Pro residues or the sequence PPG is present in a protein, possibly by augmenting the peptidyl transferase activity of the ribosome. Modification of Lys-34 is required for alleviation. This is Elongation factor P from Stenotrophomonas maltophilia (strain K279a).